The following is a 325-amino-acid chain: Beta-1,3-galactosyltransferase 6 (325 aa).

The Cytoplasmic portion of the chain corresponds to 1 to 11; it reads MKVFRRAWRHR. A helical; Signal-anchor for type II membrane protein membrane pass occupies residues 12 to 30; that stretch reads VALGLGGLAFCGTTLLYLA. The Lumenal segment spans residues 31–325; that stretch reads RCASEGETPS…QCCQRKEGVP (295 aa). N-linked (GlcNAc...) asparagine glycosylation is present at N127.

The protein belongs to the glycosyltransferase 31 family. Mn(2+) is required as a cofactor.

It is found in the golgi apparatus. It localises to the golgi stack membrane. It carries out the reaction 3-O-(beta-D-galactosyl-(1-&gt;4)-beta-D-xylosyl)-L-seryl-[protein] + UDP-alpha-D-galactose = 3-O-(beta-D-galactosyl-(1-&gt;3)-beta-D-galactosyl-(1-&gt;4)-beta-D-xylosyl)-L-seryl-[protein] + UDP + H(+). It functions in the pathway glycan metabolism; chondroitin sulfate biosynthesis. It participates in glycan metabolism; heparan sulfate biosynthesis. In terms of biological role, beta-1,3-galactosyltransferase that transfers galactose from UDP-galactose to substrates with a terminal beta-linked galactose residue. Has a preference for galactose-beta-1,4-xylose that is found in the linker region of glycosaminoglycans, such as heparan sulfate and chondroitin sulfate. Has no activity towards substrates with terminal glucosamine or galactosamine residues. This chain is Beta-1,3-galactosyltransferase 6 (B3galt6), found in Mus musculus (Mouse).